Here is a 1755-residue protein sequence, read N- to C-terminus: Transposon Ty1-MR2 Gag-Pol polyprotein (1755 aa).

Composition is skewed to polar residues over residues 1-10 (MESQQLSNYP), 48-60 (TKAN…TPAS), and 127-152 (QSQF…GNTF). Disordered regions lie at residues 1–93 (MESQ…MMTQ), 126–173 (PQSQ…RPPP), and 352–421 (GSRN…SKST). Residues 153–165 (TDSSSADSDMTST) show a composition bias toward low complexity. The interval 299–401 (NNGIHINNKV…NSKSKTARAH (103 aa)) is RNA-binding. Over residues 402-418 (NVSTSNNSPSTDNDSIS) the composition is skewed to low complexity. Phosphoserine is present on serine 416. Aspartate 461 (for protease activity; shared with dimeric partner) is an active-site residue. An integrase-type zinc finger-like region spans residues 583-640 (NVHTSESTRKYPYPFIHRMLAHANAQTIRYSLKNNTITYFNESDVDWSSAIDYQCPDC). Positions 660-835 (NSYEPFQYLH…AGLDISTLLP (176 aa)) constitute an Integrase catalytic domain. 2 residues coordinate Mg(2+): aspartate 671 and aspartate 736. Disordered regions lie at residues 956 to 1087 (SKAV…ETEK), 1092 to 1111 (RSPS…NIVP), and 1130 to 1186 (DLPL…EDNE). Over residues 960–969 (SPTDSTPPST) the composition is skewed to low complexity. Polar residues predominate over residues 1005-1015 (STPQISNIEST). A compositionally biased stretch (basic and acidic residues) spans 1038 to 1053 (ESSHASKSKDFRHSDS). 2 stretches are compositionally biased toward polar residues: residues 1054 to 1082 (YSEN…QISD) and 1101 to 1111 (PENNSSHNIVP). Residues 1178–1212 (KKRSLEDNETEIKVSRDTWNTKNMRSLEPPRSKKR) carry the Bipartite nuclear localization signal motif. The Reverse transcriptase Ty1/copia-type domain maps to 1338–1476 (NNYYITQLDI…DILGLEIKYQ (139 aa)). Positions 1346, 1427, 1428, 1610, 1652, and 1685 each coordinate Mg(2+). The 143-residue stretch at 1610–1752 (DASYGNQPYY…IKTFKLLTNK (143 aa)) folds into the RNase H Ty1/copia-type domain.

The capsid protein forms a homotrimer, from which the VLPs are assembled. The protease is a homodimer, whose active site consists of two apposed aspartic acid residues. In terms of processing, initially, virus-like particles (VLPs) are composed of the structural unprocessed proteins Gag and Gag-Pol, and also contain the host initiator methionine tRNA (tRNA(i)-Met) which serves as a primer for minus-strand DNA synthesis, and a dimer of genomic Ty RNA. Processing of the polyproteins occurs within the particle and proceeds by an ordered pathway, called maturation. First, the protease (PR) is released by autocatalytic cleavage of the Gag-Pol polyprotein yielding capsid protein p45 and a Pol-p154 precursor protein. This cleavage is a prerequisite for subsequent processing of Pol-p154 at the remaining sites to release the mature structural and catalytic proteins. Maturation takes place prior to the RT reaction and is required to produce transposition-competent VLPs.

It is found in the cytoplasm. The protein resides in the nucleus. It catalyses the reaction DNA(n) + a 2'-deoxyribonucleoside 5'-triphosphate = DNA(n+1) + diphosphate. The enzyme catalyses Endonucleolytic cleavage to 5'-phosphomonoester.. Functionally, capsid protein (CA) is the structural component of the virus-like particle (VLP), forming the shell that encapsulates the retrotransposons dimeric RNA genome. The particles are assembled from trimer-clustered units and there are holes in the capsid shells that allow for the diffusion of macromolecules. CA also has nucleocapsid-like chaperone activity, promoting primer tRNA(i)-Met annealing to the multipartite primer-binding site (PBS), dimerization of Ty1 RNA and initiation of reverse transcription. In terms of biological role, the aspartyl protease (PR) mediates the proteolytic cleavages of the Gag and Gag-Pol polyproteins after assembly of the VLP. Reverse transcriptase/ribonuclease H (RT) is a multifunctional enzyme that catalyzes the conversion of the retro-elements RNA genome into dsDNA within the VLP. The enzyme displays a DNA polymerase activity that can copy either DNA or RNA templates, and a ribonuclease H (RNase H) activity that cleaves the RNA strand of RNA-DNA heteroduplexes during plus-strand synthesis and hydrolyzes RNA primers. The conversion leads to a linear dsDNA copy of the retrotransposon that includes long terminal repeats (LTRs) at both ends. Its function is as follows. Integrase (IN) targets the VLP to the nucleus, where a subparticle preintegration complex (PIC) containing at least integrase and the newly synthesized dsDNA copy of the retrotransposon must transit the nuclear membrane. Once in the nucleus, integrase performs the integration of the dsDNA into the host genome. The sequence is that of Transposon Ty1-MR2 Gag-Pol polyprotein (TY1B-MR2) from Saccharomyces cerevisiae (strain ATCC 204508 / S288c) (Baker's yeast).